Consider the following 238-residue polypeptide: DNA damage-regulated autophagy modulator protein 1 (238 aa).

6 helical membrane passes run 9 to 29 (AFVP…SYVV), 53 to 73 (SGIF…TMYT), 91 to 111 (VFNL…GIVA), 116 to 136 (LAVP…GVVY), 161 to 181 (MVIS…ASLI), and 200 to 220 (VSAI…LTFI).

Belongs to the DRAM/TMEM150 family.

It localises to the lysosome membrane. In terms of biological role, lysosomal modulator of autophagy that plays a central role in p53/TP53-mediated apoptosis. Not involved in p73/TP73-mediated autophagy. The chain is DNA damage-regulated autophagy modulator protein 1 (DRAM1) from Homo sapiens (Human).